The primary structure comprises 609 residues: Sodium- and chloride-dependent GABA transporter 2 (609 aa).

The span at 1–13 (MDSRASGTASNGE) shows a compositional bias: polar residues. The tract at residues 1–23 (MDSRASGTASNGETKPVYPVMEK) is disordered. Topologically, residues 1–40 (MDSRASGTASNGETKPVYPVMEKEEEEGTLERGHWNNKME) are cytoplasmic. 3 helical membrane passes run 41-61 (FVLS…FPYL), 68-88 (GAFF…VFLL), and 121-141 (IVIL…FYLF). Topologically, residues 142-206 (SSFTIDLPWG…GIQHLGALRW (65 aa)) are extracellular. Cys153 and Cys162 are disulfide-bonded. Residues Asn169 and Asn173 are each glycosylated (N-linked (GlcNAc...) asparagine). Helical transmembrane passes span 207–227 (ELAL…WKGV) and 233–253 (VVYF…IRGV). Asn269 carries N-linked (GlcNAc...) asparagine glycosylation. Transmembrane regions (helical) follow at residues 282-302 (AGTQ…ALGS), 319-339 (FLNS…LGFM), 366-386 (VVML…VVLL), 418-438 (VLIL…LTEG), 453-473 (GMCL…VYGA), 490-510 (PLIK…TFLF), and 528-548 (WWGD…IPAW). At 549–609 (SLYRLGTLKG…LRLTELESHC (61 aa)) the chain is on the cytoplasmic side. Thr594 is modified (phosphothreonine). Ser598 is modified (phosphoserine).

It belongs to the sodium:neurotransmitter symporter (SNF) (TC 2.A.22) family. SLC6A13 subfamily.

Its subcellular location is the cell membrane. It is found in the basolateral cell membrane. It carries out the reaction 4-aminobutanoate(out) + chloride(out) + 2 Na(+)(out) = 4-aminobutanoate(in) + chloride(in) + 2 Na(+)(in). It catalyses the reaction taurine(out) + chloride(out) + 2 Na(+)(out) = taurine(in) + chloride(in) + 2 Na(+)(in). The enzyme catalyses beta-alanine(out) + chloride(out) + 2 Na(+)(out) = beta-alanine(in) + chloride(in) + 2 Na(+)(in). The catalysed reaction is hypotaurine(out) + chloride(out) + 2 Na(+)(out) = hypotaurine(in) + chloride(in) + 2 Na(+)(in). Its function is as follows. Mediates sodium- and chloride-dependent transport of gamma-aminobutyric acid (GABA). Can also mediate transport of beta-alanine, taurine and hypotaurine. This is Sodium- and chloride-dependent GABA transporter 2 (SLC6A13) from Macaca fascicularis (Crab-eating macaque).